Reading from the N-terminus, the 225-residue chain is Immune-associated nucleotide-binding protein 1 (225 aa).

Residues 6-214 (CPVTNLLLLG…YTENMHRKIK (209 aa)) form the AIG1-type G domain. The tract at residues 15–22 (GRSENGKS) is G1. 15 to 23 (GRSENGKSS) is a binding site for GTP. The tract at residues 42–46 (DMDQR) is G2. Residues 64–67 (DTPG) are G3. The G4 stretch occupies residues 134-137 (TGGD). The tract at residues 173–175 (NNK) is G5. Asn174 serves as a coordination point for GTP.

Belongs to the TRAFAC class TrmE-Era-EngA-EngB-Septin-like GTPase superfamily. AIG1/Toc34/Toc159-like paraseptin GTPase family. IAN subfamily. As to expression, mostly expressed in pollen.

The polypeptide is Immune-associated nucleotide-binding protein 1 (Arabidopsis thaliana (Mouse-ear cress)).